Here is a 199-residue protein sequence, read N- to C-terminus: Early nodulin-like protein 3 (199 aa).

An N-terminal signal peptide occupies residues 1-23 (MGLVMRFDLYLMFVMLMGLGFTI). Positions 27 to 128 (YKFYVGGKDG…GQKLAVKVLS (102 aa)) constitute a Phytocyanin domain. N-linked (GlcNAc...) asparagine glycans are attached at residues Asn-57 and Asn-83. The cysteines at positions 82 and 116 are disulfide-linked. The segment at 130-180 (VHHSHSPRHTSPSPSPVHQELSSPGPSPGVEPSSDSNSRVPAPGPATAPNS) is disordered. A compositionally biased stretch (low complexity) spans 138 to 165 (HTSPSPSPVHQELSSPGPSPGVEPSSDS). Asn-179 carries GPI-anchor amidated asparagine lipidation. Positions 180–199 (SAGLVGPGMVVLVIMISSLF) are cleaved as a propeptide — removed in mature form.

This sequence belongs to the early nodulin-like (ENODL) family. Confined to flowers.

It localises to the cell membrane. In terms of biological role, may act as a carbohydrate transporter. The polypeptide is Early nodulin-like protein 3 (Arabidopsis thaliana (Mouse-ear cress)).